Consider the following 179-residue polypeptide: Large ribosomal subunit protein uL6 (179 aa).

This sequence belongs to the universal ribosomal protein uL6 family. As to quaternary structure, part of the 50S ribosomal subunit.

Its function is as follows. This protein binds to the 23S rRNA, and is important in its secondary structure. It is located near the subunit interface in the base of the L7/L12 stalk, and near the tRNA binding site of the peptidyltransferase center. This chain is Large ribosomal subunit protein uL6, found in Acaryochloris marina (strain MBIC 11017).